Reading from the N-terminus, the 243-residue chain is tRNA (guanine-N(1)-)-methyltransferase (243 aa).

S-adenosyl-L-methionine-binding positions include Gly113 and 133–138 (IGDFVL).

It belongs to the RNA methyltransferase TrmD family. As to quaternary structure, homodimer.

Its subcellular location is the cytoplasm. The enzyme catalyses guanosine(37) in tRNA + S-adenosyl-L-methionine = N(1)-methylguanosine(37) in tRNA + S-adenosyl-L-homocysteine + H(+). Functionally, specifically methylates guanosine-37 in various tRNAs. The protein is tRNA (guanine-N(1)-)-methyltransferase of Bacillus velezensis (strain DSM 23117 / BGSC 10A6 / LMG 26770 / FZB42) (Bacillus amyloliquefaciens subsp. plantarum).